Consider the following 175-residue polypeptide: uncharacterized protein (175 aa).

The span at 1–10 (MSKKINNNKT) shows a compositional bias: polar residues. The disordered stretch occupies residues 1 to 21 (MSKKINNNKTPRNKVKNNNVS).

This is an uncharacterized protein from Ureaplasma parvum serovar 3 (strain ATCC 700970).